Reading from the N-terminus, the 212-residue chain is Imidazole glycerol phosphate synthase subunit HisH (212 aa).

In terms of domain architecture, Glutamine amidotransferase type-1 spans 1-210 (MIAVINYGAG…VRWSEAVQPK (210 aa)). Catalysis depends on C79, which acts as the Nucleophile. Catalysis depends on residues H185 and E187.

Heterodimer of HisH and HisF.

The protein localises to the cytoplasm. The enzyme catalyses 5-[(5-phospho-1-deoxy-D-ribulos-1-ylimino)methylamino]-1-(5-phospho-beta-D-ribosyl)imidazole-4-carboxamide + L-glutamine = D-erythro-1-(imidazol-4-yl)glycerol 3-phosphate + 5-amino-1-(5-phospho-beta-D-ribosyl)imidazole-4-carboxamide + L-glutamate + H(+). It catalyses the reaction L-glutamine + H2O = L-glutamate + NH4(+). It functions in the pathway amino-acid biosynthesis; L-histidine biosynthesis; L-histidine from 5-phospho-alpha-D-ribose 1-diphosphate: step 5/9. Functionally, IGPS catalyzes the conversion of PRFAR and glutamine to IGP, AICAR and glutamate. The HisH subunit catalyzes the hydrolysis of glutamine to glutamate and ammonia as part of the synthesis of IGP and AICAR. The resulting ammonia molecule is channeled to the active site of HisF. The polypeptide is Imidazole glycerol phosphate synthase subunit HisH (Chloroflexus aurantiacus (strain ATCC 29364 / DSM 637 / Y-400-fl)).